Consider the following 177-residue polypeptide: Basic form of pathogenesis-related protein 1 (177 aa).

The first 23 residues, 1-23 (MGFLTTIVACFITFAILIHSSKA), serve as a signal peptide directing secretion. Residue Gln24 is modified to Pyrrolidone carboxylic acid. Residues 31 to 147 (LNPHNAARRQ…NGWFFITCNY (117 aa)) enclose the SCP domain.

Belongs to the CRISP family. In terms of processing, two disulfide bonds are present.

In terms of biological role, probably involved in the defense reaction of plants against pathogens. The protein is Basic form of pathogenesis-related protein 1 of Nicotiana tabacum (Common tobacco).